The following is a 309-amino-acid chain: SERTA domain-containing protein 2 (309 aa).

Disordered regions lie at residues 1–30 (MLGK…GPSR), 79–114 (EGSL…CDLG), and 175–220 (PTST…MDSL). Basic and acidic residues predominate over residues 8 to 18 (RKFDEHEDGLE). The SERTA domain occupies 33–80 (YTLQRQTIFNISLMKLYNHRPLTEPSLQKTVLINNMLRRIQEELKQEG). 2 stretches are compositionally biased toward low complexity: residues 89 to 99 (SSQPSNSLSDS) and 175 to 189 (PTST…AAPE). Over residues 204–216 (EGPEEGRTDDSRF) the composition is skewed to basic and acidic residues. The required for transactivation activity stretch occupies residues 230-306 (TGFLTDLTLD…TELDHIMEVL (77 aa)). A Nuclear export signal (NES) motif is present at residues 233 to 238 (LTDLTL).

As to quaternary structure, interacts with XPO1; which mediates nuclear export. Interacts with TFDP1; modulates transactivation activity of TFDP1/E2F complexes. In terms of processing, polyubiquitinated, which promotes proteasomal degradation. As to expression, expressed in white and brown adipose tissue.

Its subcellular location is the nucleus. The protein resides in the cytoplasm. Its function is as follows. Acts at E2F-responsive promoters as coregulator to integrate signals provided by PHD- and/or bromodomain-containing transcription factors. May act as coactivator as well as corepressor of E2F1-TFDP1 and E2F4-TFDP1 complexes on E2F consensus binding sites, which would activate or inhibit E2F-target genes expression. Modulates fat storage by down-regulating the expression of key genes involved in adipocyte lipolysis, thermogenesis and oxidative metabolism. The sequence is that of SERTA domain-containing protein 2 (Sertad2) from Mus musculus (Mouse).